The primary structure comprises 145 residues: Large ribosomal subunit protein uL15 (145 aa).

A compositionally biased stretch (polar residues) spans 1–11; sequence MELHSLKSTPG. Residues 1-48 are disordered; it reads MELHSLKSTPGSRKEKHRKGRGHAAGKGKQAGKGQSGQRKRSKVRLGF. Positions 14 to 26 are enriched in basic residues; that stretch reads KEKHRKGRGHAAG.

Belongs to the universal ribosomal protein uL15 family. As to quaternary structure, part of the 50S ribosomal subunit.

Functionally, binds to the 23S rRNA. The sequence is that of Large ribosomal subunit protein uL15 from Mycoplasmopsis pulmonis (strain UAB CTIP) (Mycoplasma pulmonis).